Consider the following 180-residue polypeptide: Hypoxanthine-guanine phosphoribosyltransferase (180 aa).

Diphosphate-binding residues include K43 and G44. E99 and D100 together coordinate Mg(2+). Catalysis depends on D103, which acts as the Proton acceptor. GMP is bound by residues K131, 152-153 (FI), and D159. R165 provides a ligand contact to diphosphate.

This sequence belongs to the purine/pyrimidine phosphoribosyltransferase family. Mg(2+) serves as cofactor.

The protein resides in the cytoplasm. The catalysed reaction is IMP + diphosphate = hypoxanthine + 5-phospho-alpha-D-ribose 1-diphosphate. It carries out the reaction GMP + diphosphate = guanine + 5-phospho-alpha-D-ribose 1-diphosphate. It participates in purine metabolism; IMP biosynthesis via salvage pathway; IMP from hypoxanthine: step 1/1. Its pathway is purine metabolism; GMP biosynthesis via salvage pathway; GMP from guanine: step 1/1. Functionally, purine salvage pathway enzyme that catalyzes the transfer of the ribosyl-5-phosphate group from 5-phospho-alpha-D-ribose 1-diphosphate (PRPP) to the N9 position of the 6-oxopurines hypoxanthine and guanine to form the corresponding ribonucleotides IMP (inosine 5'-monophosphate) and GMP (guanosine 5'-monophosphate), with the release of PPi. This is Hypoxanthine-guanine phosphoribosyltransferase (hpt) from Streptococcus agalactiae serotype III (strain NEM316).